The sequence spans 396 residues: Mevalonate kinase (396 aa).

Residues Lys-13, Asn-55, Ser-135, and 140–146 (GAGLGSS) each bind ATP. The Proton donor role is filled by Ser-146. Residues Ser-146 and Glu-193 each contribute to the Mg(2+) site. Residue Asp-204 is the Proton acceptor of the active site.

This sequence belongs to the GHMP kinase family. Mevalonate kinase subfamily. Homodimer. Mg(2+) is required as a cofactor.

It is found in the cytoplasm. It localises to the peroxisome. It carries out the reaction (R)-mevalonate + ATP = (R)-5-phosphomevalonate + ADP + H(+). The protein operates within isoprenoid biosynthesis; isopentenyl diphosphate biosynthesis via mevalonate pathway; isopentenyl diphosphate from (R)-mevalonate: step 1/3. With respect to regulation, farnesyl pyrophosphate and geranyl pyrophosphate inhibit mevalonate kinase activity by binding competitively at the ATP-binding sites. Catalyzes the phosphorylation of mevalonate to mevalonate 5-phosphate, a key step in isoprenoid and cholesterol biosynthesis. This Bos taurus (Bovine) protein is Mevalonate kinase.